A 316-amino-acid chain; its full sequence is Beta-ketoacyl-[acyl-carrier-protein] synthase III (316 aa).

Catalysis depends on residues Cys-112 and His-243. The segment at Gln-244–Arg-248 is ACP-binding. Asn-273 is a catalytic residue.

It belongs to the thiolase-like superfamily. FabH family. In terms of assembly, homodimer.

It is found in the cytoplasm. The enzyme catalyses malonyl-[ACP] + acetyl-CoA + H(+) = 3-oxobutanoyl-[ACP] + CO2 + CoA. It functions in the pathway lipid metabolism; fatty acid biosynthesis. Functionally, catalyzes the condensation reaction of fatty acid synthesis by the addition to an acyl acceptor of two carbons from malonyl-ACP. Catalyzes the first condensation reaction which initiates fatty acid synthesis and may therefore play a role in governing the total rate of fatty acid production. Possesses both acetoacetyl-ACP synthase and acetyl transacylase activities. Its substrate specificity determines the biosynthesis of branched-chain and/or straight-chain of fatty acids. The chain is Beta-ketoacyl-[acyl-carrier-protein] synthase III from Haemophilus influenzae (strain 86-028NP).